Consider the following 281-residue polypeptide: Phosphatidylglycerol--prolipoprotein diacylglyceryl transferase (281 aa).

4 helical membrane-spanning segments follow: residues 23–43, 71–91, 107–127, and 133–153; these read VGPL…LFAW, FVIW…VLFY, WDGG…MILF, and ILVW…LGVV. Arg154 provides a ligand contact to a 1,2-diacyl-sn-glycero-3-phospho-(1'-sn-glycerol). Helical transmembrane passes span 189–209, 217–237, and 247–267; these read LYEA…LVWG, GFVA…VEFF, and LFGG…LLGL.

It belongs to the Lgt family.

The protein localises to the cell inner membrane. It catalyses the reaction L-cysteinyl-[prolipoprotein] + a 1,2-diacyl-sn-glycero-3-phospho-(1'-sn-glycerol) = an S-1,2-diacyl-sn-glyceryl-L-cysteinyl-[prolipoprotein] + sn-glycerol 1-phosphate + H(+). It functions in the pathway protein modification; lipoprotein biosynthesis (diacylglyceryl transfer). In terms of biological role, catalyzes the transfer of the diacylglyceryl group from phosphatidylglycerol to the sulfhydryl group of the N-terminal cysteine of a prolipoprotein, the first step in the formation of mature lipoproteins. In Brucella abortus (strain S19), this protein is Phosphatidylglycerol--prolipoprotein diacylglyceryl transferase.